We begin with the raw amino-acid sequence, 396 residues long: Ribosomal RNA large subunit methyltransferase I (396 aa).

The PUA domain occupies 2–81; the sequence is SVRLVLAKGR…ESIDIAFFTR (80 aa).

This sequence belongs to the methyltransferase superfamily. RlmI family.

Its subcellular location is the cytoplasm. The catalysed reaction is cytidine(1962) in 23S rRNA + S-adenosyl-L-methionine = 5-methylcytidine(1962) in 23S rRNA + S-adenosyl-L-homocysteine + H(+). Functionally, specifically methylates the cytosine at position 1962 (m5C1962) of 23S rRNA. The polypeptide is Ribosomal RNA large subunit methyltransferase I (Escherichia coli O127:H6 (strain E2348/69 / EPEC)).